Consider the following 477-residue polypeptide: Erythritol/L-threitol-binding protein (477 aa).

Residues 1 to 38 (MMSRESQPGLHRQLSRRNMLAAMGLAGAAAVSLPVLSA) constitute a signal peptide (tat-type signal).

The protein belongs to the bacterial solute-binding protein 1 family. Post-translationally, predicted to be exported by the Tat system. The position of the signal peptide cleavage has not been experimentally proven.

Functionally, part of an ABC transporter complex involved in erythritol/L-threitol import. Binds erythritol and L-threitol. Functions in the transport for the degradation pathways of erythritol and L-threitol, that allow M.smegmatis to grow on these compounds as the sole carbon source. The polypeptide is Erythritol/L-threitol-binding protein (Mycolicibacterium smegmatis (strain ATCC 700084 / mc(2)155) (Mycobacterium smegmatis)).